The primary structure comprises 170 residues: Negative modulator of initiation of replication (170 aa).

An interaction with DNA region spans residues 139 to 145 (NTNTGRK).

The protein belongs to the SeqA family. In terms of assembly, homodimer. Polymerizes to form helical filaments.

It is found in the cytoplasm. Negative regulator of replication initiation, which contributes to regulation of DNA replication and ensures that replication initiation occurs exactly once per chromosome per cell cycle. Binds to pairs of hemimethylated GATC sequences in the oriC region, thus preventing assembly of replication proteins and re-initiation at newly replicated origins. Repression is relieved when the region becomes fully methylated. This Tolumonas auensis (strain DSM 9187 / NBRC 110442 / TA 4) protein is Negative modulator of initiation of replication.